The primary structure comprises 216 residues: Octanoyltransferase (216 aa).

One can recognise a BPL/LPL catalytic domain in the interval 33-212; that stretch reads AHTPDELWLV…ILSNILGLTA (180 aa). Residues 72 to 79, 139 to 141, and 152 to 154 contribute to the substrate site; these read RGGQVTYH, SLG, and GVA. Cysteine 170 functions as the Acyl-thioester intermediate in the catalytic mechanism.

The protein belongs to the LipB family.

Its subcellular location is the cytoplasm. The enzyme catalyses octanoyl-[ACP] + L-lysyl-[protein] = N(6)-octanoyl-L-lysyl-[protein] + holo-[ACP] + H(+). The protein operates within protein modification; protein lipoylation via endogenous pathway; protein N(6)-(lipoyl)lysine from octanoyl-[acyl-carrier-protein]: step 1/2. Functionally, catalyzes the transfer of endogenously produced octanoic acid from octanoyl-acyl-carrier-protein onto the lipoyl domains of lipoate-dependent enzymes. Lipoyl-ACP can also act as a substrate although octanoyl-ACP is likely to be the physiological substrate. The sequence is that of Octanoyltransferase from Saccharophagus degradans (strain 2-40 / ATCC 43961 / DSM 17024).